Here is a 99-residue protein sequence, read N- to C-terminus: RNA-binding protein Hfq (99 aa).

Positions 9-68 constitute a Sm domain; sequence DPYLNALRRERIPVSIYLVNGIKLQGQIESFDQFVILLKNTVNQMVYKHAISTVVPARSV. The tract at residues 67–99 is disordered; the sequence is SVSHHNNNAQQQYQQQAAQAASAQSNETSSQAE. Low complexity predominate over residues 72–99; sequence NNNAQQQYQQQAAQAASAQSNETSSQAE.

This sequence belongs to the Hfq family. As to quaternary structure, homohexamer.

Its function is as follows. RNA chaperone that binds small regulatory RNA (sRNAs) and mRNAs to facilitate mRNA translational regulation in response to envelope stress, environmental stress and changes in metabolite concentrations. Also binds with high specificity to tRNAs. The sequence is that of RNA-binding protein Hfq from Actinobacillus succinogenes (strain ATCC 55618 / DSM 22257 / CCUG 43843 / 130Z).